Reading from the N-terminus, the 134-residue chain is Profilin-4 (134 aa).

Cysteines 13 and 118 form a disulfide. The Involved in PIP2 interaction signature appears at 84 to 100 (AVIRGKKGSGGITIKKT). Thr-114 carries the post-translational modification Phosphothreonine.

The protein belongs to the profilin family. In terms of assembly, occurs in many kinds of cells as a complex with monomeric actin in a 1:1 ratio. Post-translationally, phosphorylated by MAP kinases.

The protein localises to the cytoplasm. It localises to the cytoskeleton. Functionally, binds to actin and affects the structure of the cytoskeleton. At high concentrations, profilin prevents the polymerization of actin, whereas it enhances it at low concentrations. The chain is Profilin-4 from Olea europaea (Common olive).